Consider the following 434-residue polypeptide: Nicotinate phosphoribosyltransferase (434 aa).

The residue at position 242 (histidine 242) is a Phosphohistidine; by autocatalysis.

The protein belongs to the NAPRTase family. Post-translationally, transiently phosphorylated on a His residue during the reaction cycle. Phosphorylation strongly increases the affinity for substrates and increases the rate of nicotinate D-ribonucleotide production. Dephosphorylation regenerates the low-affinity form of the enzyme, leading to product release.

It catalyses the reaction nicotinate + 5-phospho-alpha-D-ribose 1-diphosphate + ATP + H2O = nicotinate beta-D-ribonucleotide + ADP + phosphate + diphosphate. It participates in cofactor biosynthesis; NAD(+) biosynthesis; nicotinate D-ribonucleotide from nicotinate: step 1/1. In terms of biological role, catalyzes the synthesis of beta-nicotinate D-ribonucleotide from nicotinate and 5-phospho-D-ribose 1-phosphate at the expense of ATP. The chain is Nicotinate phosphoribosyltransferase from Rhizobium leguminosarum bv. trifolii (strain WSM2304).